We begin with the raw amino-acid sequence, 2083 residues long: Centriole proteome protein 16 (2083 aa).

The segment at 205–333 is disordered; the sequence is DAPTMDFMPP…PAVPPPLSPS (129 aa). The segment covering 227–245 has biased composition (low complexity); it reads TAETADTAGAAGRKSLSGA. Residues 246–258 show a composition bias toward gly residues; that stretch reads SAGGAGPAKGGAK. Low complexity-rich tracts occupy residues 259 to 274 and 283 to 292; these read AGAA…SAGA and GSTAGAATPG. Positions 302 to 315 are enriched in acidic residues; the sequence is GEEDFEDDLSEDLD. Over residues 319–331 the composition is skewed to pro residues; sequence PLPPSPAVPPPLS. WD repeat units follow at residues 482 to 523, 526 to 569, 579 to 620, 689 to 726, 728 to 767, 770 to 809, 812 to 853, 856 to 895, 990 to 1029, and 1041 to 1079; these read GHTA…CLAI, AHAS…AAGG, ATEY…GTSV, LHAA…YLLE, EHEG…YTTL, SHCG…QLYE, APGE…LLQE, QHRA…APAQ, VSPL…ALRG, and GHPS…MQQE. Disordered regions lie at residues 1113–1141 and 1225–1276; these read HTQA…VASA and ALVV…PPPP. Residues 1263-1276 are compositionally biased toward pro residues; that stretch reads VPLPPSPQPLPPPP. WD repeat units lie at residues 1326 to 1365, 1403 to 1444, 1448 to 1486, 1497 to 1539, 1651 to 1691, 1736 to 1781, and 1785 to 1824; these read GHNR…RAAQ, YHPL…LVAA, EQSP…LEQR, RDPR…QPPQ, GQAA…AEPA, DPLD…QLSW, and RHPA…LVSY. The interval 1713–1743 is disordered; the sequence is APAHTLRHPPSAAPSSAASSSPLDPLDPLPA. The span at 1720–1743 shows a compositional bias: low complexity; sequence HPPSAAPSSAASSSPLDPLDPLPA. The tract at residues 1832–1870 is disordered; that stretch reads GPTPHSPGGTGRRSPRGAASPPPAPPRPGTGPLQAMAVS. A compositionally biased stretch (pro residues) spans 1851 to 1860; that stretch reads SPPPAPPRPG. One copy of the WD 18 repeat lies at 2035–2073; that stretch reads GHAGAVAAASYTGDGGHAVTASGSVLMVWDAAQLLKGVT.

This sequence belongs to the WD repeat WDR90/POC16 family.

The protein localises to the cytoplasm. It localises to the cytoskeleton. Its subcellular location is the microtubule organizing center. It is found in the centrosome. The protein resides in the centriole. Its function is as follows. Required for flagellum assembly and/or maintenance. In Chlamydomonas reinhardtii (Chlamydomonas smithii), this protein is Centriole proteome protein 16.